The chain runs to 251 residues: tRNA (guanine-N(1)-)-methyltransferase (251 aa).

Residues Gly113 and 133-138 (IGDYVL) each bind S-adenosyl-L-methionine.

This sequence belongs to the RNA methyltransferase TrmD family. As to quaternary structure, homodimer.

The protein localises to the cytoplasm. It carries out the reaction guanosine(37) in tRNA + S-adenosyl-L-methionine = N(1)-methylguanosine(37) in tRNA + S-adenosyl-L-homocysteine + H(+). Functionally, specifically methylates guanosine-37 in various tRNAs. This is tRNA (guanine-N(1)-)-methyltransferase from Pectobacterium carotovorum subsp. carotovorum (strain PC1).